The primary structure comprises 440 residues: Damage-control phosphatase ARMT1 (440 aa).

Residues D252 and N253 each contribute to the Mn(2+) site. Position 252–253 (252–253) interacts with substrate; that stretch reads DN. The S-adenosyl-L-methionine site is built by E257 and D290. Position 290 (D290) interacts with Mn(2+). Substrate-binding positions include 366–370 and K403; that span reads DLNYR. A Subfamily III RTxK motif motif is present at residues 400 to 403; that stretch reads RTLK.

The protein belongs to the damage-control phosphatase family. Sugar phosphate phosphatase III subfamily. Requires Mn(2+) as cofactor. The cofactor is Ni(2+). In terms of processing, automethylated.

It carries out the reaction beta-D-fructose 1-phosphate + H2O = D-fructose + phosphate. The catalysed reaction is beta-D-fructose 6-phosphate = dihydroxyacetone + D-glyceraldehyde 3-phosphate. It catalyses the reaction L-glutamyl-[protein] + S-adenosyl-L-methionine = [protein]-L-glutamate 5-O-methyl ester + S-adenosyl-L-homocysteine. Its function is as follows. Metal-dependent phosphatase that shows phosphatase activity against several substrates, including fructose-1-phosphate and fructose-6-phosphate. Its preference for fructose-1-phosphate, a strong glycating agent that causes DNA damage rather than a canonical yeast metabolite, suggests a damage-control function in hexose phosphate metabolism. Has also been shown to have O-methyltransferase activity that methylates glutamate residues of target proteins to form gamma-glutamyl methyl ester residues. Possibly methylates PCNA, suggesting it is involved in the DNA damage response. This is Damage-control phosphatase ARMT1 from Xenopus laevis (African clawed frog).